We begin with the raw amino-acid sequence, 125 residues long: Small ribosomal subunit protein bS6 (125 aa).

Residues 96–125 (VTAPSPMMREEKAKSAPQPAEEAKETTLAT) are disordered. Positions 116 to 125 (EEAKETTLAT) are enriched in basic and acidic residues.

Belongs to the bacterial ribosomal protein bS6 family.

Functionally, binds together with bS18 to 16S ribosomal RNA. The polypeptide is Small ribosomal subunit protein bS6 (Nitrosospira multiformis (strain ATCC 25196 / NCIMB 11849 / C 71)).